The sequence spans 485 residues: Aspartyl/glutamyl-tRNA(Asn/Gln) amidotransferase subunit B (485 aa).

This sequence belongs to the GatB/GatE family. GatB subfamily. As to quaternary structure, heterotrimer of A, B and C subunits.

The enzyme catalyses L-glutamyl-tRNA(Gln) + L-glutamine + ATP + H2O = L-glutaminyl-tRNA(Gln) + L-glutamate + ADP + phosphate + H(+). The catalysed reaction is L-aspartyl-tRNA(Asn) + L-glutamine + ATP + H2O = L-asparaginyl-tRNA(Asn) + L-glutamate + ADP + phosphate + 2 H(+). Allows the formation of correctly charged Asn-tRNA(Asn) or Gln-tRNA(Gln) through the transamidation of misacylated Asp-tRNA(Asn) or Glu-tRNA(Gln) in organisms which lack either or both of asparaginyl-tRNA or glutaminyl-tRNA synthetases. The reaction takes place in the presence of glutamine and ATP through an activated phospho-Asp-tRNA(Asn) or phospho-Glu-tRNA(Gln). The sequence is that of Aspartyl/glutamyl-tRNA(Asn/Gln) amidotransferase subunit B from Borrelia turicatae (strain 91E135).